The sequence spans 553 residues: Terpene synthase 16 (553 aa).

Mg(2+)-binding residues include D303, D307, and E457. Positions 303 to 307 (DDTYD) match the DDXXD motif motif.

This sequence belongs to the terpene synthase family. Tpsa subfamily. The cofactor is Mg(2+). Mn(2+) is required as a cofactor. In terms of tissue distribution, expressed in leaves, trichomes and flowers.

It functions in the pathway secondary metabolite biosynthesis; terpenoid biosynthesis. Functionally, sesquiterpene synthase involved in the biosynthesis of volatile compounds. No activity detected with geranyl diphosphate (GPP) and farnesyl diphosphate (FPP) as substrates. This chain is Terpene synthase 16, found in Solanum lycopersicum (Tomato).